We begin with the raw amino-acid sequence, 375 residues long: PqqA peptide cyclase (375 aa).

Residues Ile18 to Leu235 form the Radical SAM core domain. [4Fe-4S] cluster contacts are provided by Cys32, Cys36, and Cys39.

It belongs to the radical SAM superfamily. PqqE family. In terms of assembly, interacts with PqqD. The interaction is necessary for activity of PqqE. [4Fe-4S] cluster is required as a cofactor.

It carries out the reaction [PQQ precursor protein] + S-adenosyl-L-methionine = E-Y cross-linked-[PQQ precursor protein] + 5'-deoxyadenosine + L-methionine + H(+). It participates in cofactor biosynthesis; pyrroloquinoline quinone biosynthesis. Catalyzes the cross-linking of a glutamate residue and a tyrosine residue in the PqqA protein as part of the biosynthesis of pyrroloquinoline quinone (PQQ). The polypeptide is PqqA peptide cyclase (Rhizobium meliloti (strain 1021) (Ensifer meliloti)).